The sequence spans 184 residues: uncharacterized protein (184 aa).

Residues 1-20 (MYQLEKIWVLLCLALVGVLG) form the signal peptide.

This is an uncharacterized protein from Drosophila melanogaster (Fruit fly).